The sequence spans 353 residues: Fe(3+) ions import ATP-binding protein FbpC (353 aa).

The region spanning 9–239 (VTFENVTKKF…PASAFIADFM (231 aa)) is the ABC transporter domain. Residue 41 to 48 (GLSGCGKT) participates in ATP binding.

Belongs to the ABC transporter superfamily. Fe(3+) ion importer (TC 3.A.1.10) family. In terms of assembly, the complex is composed of two ATP-binding proteins (FbpC), two transmembrane proteins (FbpB) and a solute-binding protein (FbpA).

It is found in the cell inner membrane. It carries out the reaction Fe(3+)(out) + ATP + H2O = Fe(3+)(in) + ADP + phosphate + H(+). Functionally, part of the ABC transporter complex FbpABC involved in Fe(3+) ions import. Responsible for energy coupling to the transport system. This Brucella melitensis biotype 1 (strain ATCC 23456 / CCUG 17765 / NCTC 10094 / 16M) protein is Fe(3+) ions import ATP-binding protein FbpC.